The chain runs to 102 residues: Cytochrome c (102 aa).

Gly-1 is subject to N-acetylglycine. Residues 1–11 (GDAERGKKLFE) show a composition bias toward basic and acidic residues. Residues 1–26 (GDAERGKKLFESRAGQCHSSQKGVNS) form a disordered region. 3 residues coordinate heme c: Cys-17, His-18, and Met-79. The span at 17–26 (CHSSQKGVNS) shows a compositional bias: polar residues. Residue Lys-85 is modified to N6,N6,N6-trimethyllysine.

Belongs to the cytochrome c family. In terms of processing, binds 1 heme c group covalently per subunit.

It localises to the mitochondrion intermembrane space. In terms of biological role, electron carrier protein. The oxidized form of the cytochrome c heme group can accept an electron from the heme group of the cytochrome c1 subunit of cytochrome reductase. Cytochrome c then transfers this electron to the cytochrome oxidase complex, the final protein carrier in the mitochondrial electron-transport chain. This is Cytochrome c from Euglena viridis (Cercaria viridis).